The chain runs to 102 residues: Large ribosomal subunit protein bL21 (102 aa).

Belongs to the bacterial ribosomal protein bL21 family. Part of the 50S ribosomal subunit. Contacts protein L20.

Functionally, this protein binds to 23S rRNA in the presence of protein L20. The polypeptide is Large ribosomal subunit protein bL21 (Onion yellows phytoplasma (strain OY-M)).